The sequence spans 286 residues: uncharacterized protein (286 aa).

NADP(+)-binding residues include I54, N128, and K162. The Proton donor role is filled by S178. NADP(+)-binding residues include Y192, K196, I225, and T227. Residue Y192 is the Proton acceptor of the active site. K196 serves as the catalytic Lowers pKa of active site Tyr.

The protein belongs to the short-chain dehydrogenases/reductases (SDR) family.

This is an uncharacterized protein from Schizosaccharomyces pombe (strain 972 / ATCC 24843) (Fission yeast).